The chain runs to 222 residues: MAASVRKARSLLGLTATLAPGSRGYRAPPPPRREPGPWWPDPEDLLTHRWQLGPRYAAKQFARYGAASGVAPGSLWPSPEQLRELEAEEREWYPSLATMQESLRVKHLAEEQKRREREQHIAECMAKMPQMIVNWQQQQRERWEKAQADKERRARLQAEAQELLGYQVNPKSARFQELLQDLEKKERKRLKEEKQRQKQEARAAALAAAAAQDPAASGAPSS.

2 disordered regions span residues 14–40 and 188–222; these read LTATLAPGSRGYRAPPPPRREPGPWWP and KRLKEEKQRQKQEARAAALAAAAAQDPAASGAPSS. The stretch at 144–213 forms a coiled coil; it reads EKAQADKERR…AALAAAAAQD (70 aa). The Nuclear localization signal signature appears at 184 to 200; the sequence is KKERKRLKEEKQRQKQE. Residues 188 to 201 are compositionally biased toward basic and acidic residues; that stretch reads KRLKEEKQRQKQEA. Over residues 202–216 the composition is skewed to low complexity; sequence RAAALAAAAAQDPAA.

The protein belongs to the mitochondrion-specific ribosomal protein mL64 family. Component of the mitochondrial ribosome large subunit (39S) which comprises a 16S rRNA and about 50 distinct proteins. Interacts with GADD45A, GADD45B and GADD45G. Interacts with NR4A1 via the NR4A1 AB domain. Interacts with ATAD3A and ATAD3B.

It localises to the mitochondrion. It is found in the nucleus. Functionally, acts as a negative regulator of G1 to S cell cycle phase progression by inhibiting cyclin-dependent kinases. Inhibitory effects are additive with GADD45 proteins but also occur in the absence of GADD45 proteins. Acts as a repressor of the orphan nuclear receptor NR4A1 by inhibiting AB domain-mediated transcriptional activity. May be involved in the hormone-mediated regulation of NR4A1 transcriptional activity. May play a role in mitochondrial protein synthesis. This Chlorocebus aethiops (Green monkey) protein is Large ribosomal subunit protein mL64 (GADD45GIP1).